A 569-amino-acid polypeptide reads, in one-letter code: BTB/POZ domain-containing protein At3g50840 (569 aa).

The BTB domain maps to 18 to 87 (SDIEIEVDDI…SYGFKVDISV (70 aa)). The 266-residue stretch at 194–459 (ELWFEDLTEL…VQVLFLEQLQ (266 aa)) folds into the NPH3 domain. Low complexity predominate over residues 240–259 (ISRSSSASSSSSSSSTTIAS). The segment at 240 to 261 (ISRSSSASSSSSSSSTTIASEN) is disordered. Tyrosine 400 is subject to Phosphotyrosine.

This sequence belongs to the NPH3 family.

The protein operates within protein modification; protein ubiquitination. Functionally, may act as a substrate-specific adapter of an E3 ubiquitin-protein ligase complex (CUL3-RBX1-BTB) which mediates the ubiquitination and subsequent proteasomal degradation of target proteins. The sequence is that of BTB/POZ domain-containing protein At3g50840 from Arabidopsis thaliana (Mouse-ear cress).